A 728-amino-acid polypeptide reads, in one-letter code: Bacteriophytochrome (728 aa).

C12 contacts a tetrapyrrole. Positions 17 to 495 are chromophore binding domain; the sequence is IHVPGAIQPH…RLDLMELCLN (479 aa). The GAF domain maps to 139 to 303; the sequence is DTASLLSNVT…IFSQVCSAIV (165 aa). In terms of domain architecture, Histidine kinase spans 510–721; sequence VLGHDLRNPL…TFCLRLPVRQ (212 aa). The residue at position 513 (H513) is a Phosphohistidine; by autocatalysis.

It in the N-terminal section; belongs to the phytochrome family. Post-translationally, contains one covalently linked tetrapyrrole chromophore.

The enzyme catalyses ATP + protein L-histidine = ADP + protein N-phospho-L-histidine.. Functionally, photoreceptor which exists in two forms that are reversibly interconvertible by light: the R form that absorbs maximally in the red region of the spectrum and the FR form that absorbs maximally in the far-red region. This Pseudomonas aeruginosa (strain ATCC 15692 / DSM 22644 / CIP 104116 / JCM 14847 / LMG 12228 / 1C / PRS 101 / PAO1) protein is Bacteriophytochrome (bphP).